A 488-amino-acid polypeptide reads, in one-letter code: Diacylglycerol O-acyltransferase 1 (488 aa).

A disordered region spans residues 1-57 (MGDRGSSRRRRTGSRPSSHGGGGPAAAEEEVRDAAAGPDVGAAGDAPAPAPNKDGDA). The Cytoplasmic segment spans residues 1–83 (MGDRGSSRRR…SLFSSDSGFS (83 aa)). The interval 1–91 (MGDRGSSRRR…FSNYRGILNW (91 aa)) is involved in homomerization. Residues Ser-17 and Ser-18 each carry the phosphoserine modification. Positions 34–47 (AAAGPDVGAAGDAP) are enriched in low complexity. Residues 84–118 (NYRGILNWCVVMLILSNARLFLENLIKYGILVDPI) form a helical membrane-spanning segment. Topologically, residues 119–130 (QVVSLFLKDPYS) are lumenal. Residues 119–130 (QVVSLFLKDPYS) are extracellular loop 1 (EL1). The helical transmembrane segment at 131 to 156 (WPAPCLVIAANVFAVAAFQVEKRLAV) threads the bilayer. Residues 131–488 (WPAPCLVIAA…LNYEAPAAEA (358 aa)) are MBOAT fold. Residues 157 to 161 (GALTE) lie on the Cytoplasmic side of the membrane. The helical transmembrane segment at 162-184 (QAGLLLHVANLATILCFPAAVVL) threads the bilayer. Residues 185-191 (LVESITP) lie on the Lumenal side of the membrane. The chain crosses the membrane as a helical span at residues 192–223 (VGSLLALMAHTILFLKLFSYRDVNSWCRRARA). Residues 224-273 (KAASAGKKASSAAAPHTVSYPDNLTYRDLYYFLFAPTLCYELNFPRSPRI) lie on the Cytoplasmic side of the membrane. Positions 224–276 (KAASAGKKASSAAAPHTVSYPDNLTYRDLYYFLFAPTLCYELNFPRSPRIRKR) are intracellular loop 1 (IL1). The helical transmembrane segment at 274 to 308 (RKRFLLRRILEMLFFTQLQVGLIQQWMVPTIQNSM) threads the bilayer. At 309 to 315 (KPFKDMD) the chain is on the lumenal side. A helical membrane pass occupies residues 316–353 (YSRIIERLLKLAVPNHLIWLIFFYWLFHSCLNAVAELM). Over 354 to 399 (QFGDREFYRDWWNSESVTYFWQNWNIPVHKWCIRHFYKPMLRRGSS) the chain is Cytoplasmic. The intracellular loop 2 (IL2) stretch occupies residues 354 to 399 (QFGDREFYRDWWNSESVTYFWQNWNIPVHKWCIRHFYKPMLRRGSS). The FYXDWWN motif motif lies at 360–366 (FYRDWWN). Residues 374–382 (WQNWNIPVH), Tyr-390, and Arg-404 contribute to the an acyl-CoA site. Residues 380 to 394 (PVHKWCIRHFYKPML) are amphipathic helix (AH). A helical membrane pass occupies residues 400-420 (KWMARTGVFLASAFFHEYLVS). His-415 is an active-site residue. The Lumenal segment spans residues 421-428 (VPLRMFRL). A helical membrane pass occupies residues 429 to 447 (WAFTGMMAQIPLAWFVGRF). Topologically, residues 448 to 449 (FQ) are cytoplasmic. The helical transmembrane segment at 450-481 (GNYGNAAVWLSLIIGQPIAVLMYVHDYYVLNY) threads the bilayer. Tyr-477 serves as a coordination point for an acyl-CoA. Over 482–488 (EAPAAEA) the chain is Lumenal.

This sequence belongs to the membrane-bound acyltransferase family. Sterol o-acyltransferase subfamily. In terms of assembly, homodimer or homotetramer; both forms have similar enzymatic activities.

Its subcellular location is the endoplasmic reticulum membrane. It carries out the reaction an acyl-CoA + a 1,2-diacyl-sn-glycerol = a triacyl-sn-glycerol + CoA. The enzyme catalyses all-trans-retinol + an acyl-CoA = an all-trans-retinyl ester + CoA. It catalyses the reaction 2-(9Z-octadecenoyl)-glycerol + (9Z)-octadecenoyl-CoA = 1,2-di-(9Z-octadecenoyl)-sn-glycerol + CoA. The catalysed reaction is 1,2-di-(9Z-octadecenoyl)-sn-glycerol + (9Z)-octadecenoyl-CoA = 1,2,3-tri-(9Z-octadecenoyl)-glycerol + CoA. It carries out the reaction all-trans-retinol + hexadecanoyl-CoA = all-trans-retinyl hexadecanoate + CoA. The enzyme catalyses 1-O-(9Z-octadecenyl)-glycerol + (9Z)-octadecenoyl-CoA = 1-O-(9Z-octadecyl)-3-(9Z-octadecenoyl)-glycerol + CoA. It catalyses the reaction 1-O-(9Z-octadecyl)-3-(9Z-octadecenoyl)-glycerol + (9Z)-octadecenoyl-CoA = 1-O-(9Z-octadecenyl)-2,3-di-(9Z-octadecenoyl)glycerol + CoA. The catalysed reaction is 1-(9Z-octadecenoyl)-glycerol + (9Z)-octadecenoyl-CoA = 1,2-di-(9Z-octadecenoyl)-glycerol + CoA. It carries out the reaction 1,2-di-(9Z-octadecenoyl)-glycerol + (9Z)-octadecenoate + H(+) = 1,2,3-tri-(9Z-octadecenoyl)-glycerol + H2O. The enzyme catalyses 1-octadecanoyl-2-(5Z,8Z,11Z,14Z-eicosatetraenoyl)-sn-glycerol + (9Z)-octadecenoyl-CoA = 1-octadecanoyl-2-(5Z,8Z,11Z,14Z)-eicosatetraenoyl-3-(9Z)-octadecenoyl-sn-glycerol + CoA. It catalyses the reaction hexadecane-1,2-diol + 2 hexadecanoyl-CoA = 1,2-O,O-dihexadecanoyl-1,2-hexadecanediol + 2 CoA. The catalysed reaction is hexadecane-1,2-diol + hexadecanoyl-CoA = 2-hydroxyhexadecyl hexadecanoate + CoA. It carries out the reaction 2-(9Z-octadecenoyl)-glycerol + hexadecanoyl-CoA = 1-hexadecanoyl-2-(9Z-octadecenoyl)-sn-glycerol + CoA. The enzyme catalyses 1,2-di-(9Z-octadecenoyl)-sn-glycerol + hexadecanoyl-CoA = 1,2-di-(9Z)-octadecenoyl-3-hexadecanoyl-sn-glycerol + CoA. It catalyses the reaction hexadecan-1-ol + hexadecanoyl-CoA = hexadecanyl hexadecanoate + CoA. The catalysed reaction is 13-cis-retinol + hexadecanoyl-CoA = 13-cis-retinyl hexadecanoate + CoA. It carries out the reaction 1,3-di-(9Z-octadecenoyl)-glycerol + (9Z)-octadecenoyl-CoA = 1,2,3-tri-(9Z-octadecenoyl)-glycerol + CoA. The enzyme catalyses 2,3-di-(9Z)-octadecenoyl-sn-glycerol + (9Z)-octadecenoyl-CoA = 1,2,3-tri-(9Z-octadecenoyl)-glycerol + CoA. The protein operates within lipid metabolism; glycerolipid metabolism. Its activity is regulated as follows. XP620 is a selective DGAT1 inhibitor. In terms of biological role, catalyzes the terminal and only committed step in triacylglycerol synthesis by using diacylglycerol and fatty acyl CoA as substrates. Highly expressed in epithelial cells of the small intestine and its activity is essential for the absorption of dietary fats. In liver, plays a role in esterifying exogenous fatty acids to glycerol, and is required to synthesize fat for storage. Also present in female mammary glands, where it produces fat in the milk. May be involved in VLDL (very low density lipoprotein) assembly. In contrast to DGAT2 it is not essential for survival. Functions as the major acyl-CoA retinol acyltransferase (ARAT) in the skin, where it acts to maintain retinoid homeostasis and prevent retinoid toxicity leading to skin and hair disorders. Exhibits additional acyltransferase activities, includin acyl CoA:monoacylglycerol acyltransferase (MGAT), wax monoester and wax diester synthases. Also able to use 1-monoalkylglycerol (1-MAkG) as an acyl acceptor for the synthesis of monoalkyl-monoacylglycerol (MAMAG). The chain is Diacylglycerol O-acyltransferase 1 from Homo sapiens (Human).